Consider the following 301-residue polypeptide: Phosphatidylglycerol--prolipoprotein diacylglyceryl transferase (301 aa).

A run of 4 helical transmembrane segments spans residues 10–30, 57–77, 92–112, and 119–139; these read IAFS…LASF, LLFY…MLFY, VWEG…AVAW, and LQMF…LGFG. Residue Arg140 participates in a 1,2-diacyl-sn-glycero-3-phospho-(1'-sn-glycerol) binding. The next 3 membrane-spanning stretches (helical) occupy residues 202–222, 230–250, and 264–284; these read PSQL…LWLF, YAVS…VEFV, and LTRG…LFWL.

The protein belongs to the Lgt family.

It is found in the cell inner membrane. The enzyme catalyses L-cysteinyl-[prolipoprotein] + a 1,2-diacyl-sn-glycero-3-phospho-(1'-sn-glycerol) = an S-1,2-diacyl-sn-glyceryl-L-cysteinyl-[prolipoprotein] + sn-glycerol 1-phosphate + H(+). The protein operates within protein modification; lipoprotein biosynthesis (diacylglyceryl transfer). Its function is as follows. Catalyzes the transfer of the diacylglyceryl group from phosphatidylglycerol to the sulfhydryl group of the N-terminal cysteine of a prolipoprotein, the first step in the formation of mature lipoproteins. The polypeptide is Phosphatidylglycerol--prolipoprotein diacylglyceryl transferase (Xylella fastidiosa (strain 9a5c)).